The following is a 195-amino-acid chain: Phosphoheptose isomerase (195 aa).

An SIS domain is found at 37 to 195 (ISDSFKQHGK…IEFEMAKIRQ (159 aa)). 52 to 54 (NGG) lines the substrate pocket. The Zn(2+) site is built by H61 and E65. Residues E65, 93-94 (ND), 119-121 (STS), S124, and Q172 each bind substrate. The Zn(2+) site is built by Q172 and H180.

This sequence belongs to the SIS family. GmhA subfamily. In terms of assembly, homotetramer. Requires Zn(2+) as cofactor.

The protein localises to the cytoplasm. The catalysed reaction is 2 D-sedoheptulose 7-phosphate = D-glycero-alpha-D-manno-heptose 7-phosphate + D-glycero-beta-D-manno-heptose 7-phosphate. The protein operates within carbohydrate biosynthesis; D-glycero-D-manno-heptose 7-phosphate biosynthesis; D-glycero-alpha-D-manno-heptose 7-phosphate and D-glycero-beta-D-manno-heptose 7-phosphate from sedoheptulose 7-phosphate: step 1/1. Functionally, catalyzes the isomerization of sedoheptulose 7-phosphate in D-glycero-D-manno-heptose 7-phosphate. This chain is Phosphoheptose isomerase, found in Histophilus somni (strain 2336) (Haemophilus somnus).